The following is a 341-amino-acid chain: Holliday junction branch migration complex subunit RuvB (341 aa).

The segment at Met-1 to Tyr-180 is large ATPase domain (RuvB-L). Positions 19, 20, 61, 64, 65, 66, 170, 180, and 217 each coordinate ATP. A Mg(2+)-binding site is contributed by Thr-65. The segment at Asn-181–Gly-251 is small ATPAse domain (RuvB-S). Residues Asp-254–Phe-341 form a head domain (RuvB-H) region. DNA-binding residues include Arg-309 and Arg-314.

Belongs to the RuvB family. Homohexamer. Forms an RuvA(8)-RuvB(12)-Holliday junction (HJ) complex. HJ DNA is sandwiched between 2 RuvA tetramers; dsDNA enters through RuvA and exits via RuvB. An RuvB hexamer assembles on each DNA strand where it exits the tetramer. Each RuvB hexamer is contacted by two RuvA subunits (via domain III) on 2 adjacent RuvB subunits; this complex drives branch migration. In the full resolvosome a probable DNA-RuvA(4)-RuvB(12)-RuvC(2) complex forms which resolves the HJ.

The protein resides in the cytoplasm. The enzyme catalyses ATP + H2O = ADP + phosphate + H(+). Its function is as follows. The RuvA-RuvB-RuvC complex processes Holliday junction (HJ) DNA during genetic recombination and DNA repair, while the RuvA-RuvB complex plays an important role in the rescue of blocked DNA replication forks via replication fork reversal (RFR). RuvA specifically binds to HJ cruciform DNA, conferring on it an open structure. The RuvB hexamer acts as an ATP-dependent pump, pulling dsDNA into and through the RuvAB complex. RuvB forms 2 homohexamers on either side of HJ DNA bound by 1 or 2 RuvA tetramers; 4 subunits per hexamer contact DNA at a time. Coordinated motions by a converter formed by DNA-disengaged RuvB subunits stimulates ATP hydrolysis and nucleotide exchange. Immobilization of the converter enables RuvB to convert the ATP-contained energy into a lever motion, pulling 2 nucleotides of DNA out of the RuvA tetramer per ATP hydrolyzed, thus driving DNA branch migration. The RuvB motors rotate together with the DNA substrate, which together with the progressing nucleotide cycle form the mechanistic basis for DNA recombination by continuous HJ branch migration. Branch migration allows RuvC to scan DNA until it finds its consensus sequence, where it cleaves and resolves cruciform DNA. This Leptospira borgpetersenii serovar Hardjo-bovis (strain L550) protein is Holliday junction branch migration complex subunit RuvB.